A 100-amino-acid polypeptide reads, in one-letter code: NADH-quinone oxidoreductase subunit K (100 aa).

Transmembrane regions (helical) follow at residues 2 to 22, 29 to 49, and 63 to 83; these read VPTT…MIGV, IMVF…LVAF, and FIVM…IVAI.

This sequence belongs to the complex I subunit 4L family. NDH-1 is composed of 15 different subunits. Subunits NuoA, H, J, K, L, M, N constitute the membrane sector of the complex.

It is found in the cell membrane. It carries out the reaction a quinone + NADH + 5 H(+)(in) = a quinol + NAD(+) + 4 H(+)(out). Functionally, NDH-1 shuttles electrons from NADH, via FMN and iron-sulfur (Fe-S) centers, to quinones in the respiratory chain. The immediate electron acceptor for the enzyme in this species is believed to be a menaquinone. Couples the redox reaction to proton translocation (for every two electrons transferred, four hydrogen ions are translocated across the cytoplasmic membrane), and thus conserves the redox energy in a proton gradient. The sequence is that of NADH-quinone oxidoreductase subunit K from Deinococcus deserti (strain DSM 17065 / CIP 109153 / LMG 22923 / VCD115).